A 146-amino-acid polypeptide reads, in one-letter code: Hemoglobin subunit beta-1 (146 aa).

Residues 2–146 (EWSSNERSTI…VISALSRQYF (145 aa)) enclose the Globin domain. Residues histidine 63 and histidine 92 each coordinate heme b.

Belongs to the globin family. In terms of assembly, heterotetramer of two alpha chains and two beta chains. As to expression, red blood cells.

Involved in oxygen transport from gills to the various peripheral tissues. This is Hemoglobin subunit beta-1 (hbb1) from Muraena helena (Mediterranean moray).